A 394-amino-acid chain; its full sequence is Teichoic acid poly(glycerol phosphate) polymerase (394 aa).

It belongs to the CDP-glycerol glycerophosphotransferase family.

It is found in the cell membrane. It catalyses the reaction 4-O-[(2R)-glycerylphospho]-N-acetyl-beta-D-mannosaminyl-(1-&gt;4)-N-acetyl-alpha-D-glucosaminyl di-trans,octa-cis-undecaprenyl diphosphate + n CDP-glycerol = 4-O-{[(2R)-1-glycerylphospho](n)-(2R)-1-glycerylphospho}-N-acetyl-beta-D-mannosaminyl-(1-&gt;4)-N-acetyl-alpha-D-glucosaminyl undecaprenyl diphosphate + n CMP + n H(+). In terms of biological role, catalyzes the addition of further 2-8 glycerol phosphate units from CDP-glycerol to the single glycerol phosphate unit bound to the prenolpyrophosphate-linked disaccharide. The function in the cell is unknown since the product is not part of the poly(ribitol phosphate) teichoic acid found in the cell walls. The sequence is that of Teichoic acid poly(glycerol phosphate) polymerase (tarF) from Bacillus spizizenii (strain ATCC 23059 / NRRL B-14472 / W23) (Bacillus subtilis subsp. spizizenii).